Reading from the N-terminus, the 253-residue chain is Triosephosphate isomerase (253 aa).

8–10 (NWK) is a substrate binding site. The active-site Electrophile is the H93. E165 serves as the catalytic Proton acceptor. Substrate-binding positions include G171, S210, and 231-232 (GG).

Belongs to the triosephosphate isomerase family. Homodimer.

Its subcellular location is the cytoplasm. It catalyses the reaction D-glyceraldehyde 3-phosphate = dihydroxyacetone phosphate. It functions in the pathway carbohydrate biosynthesis; gluconeogenesis. The protein operates within carbohydrate degradation; glycolysis; D-glyceraldehyde 3-phosphate from glycerone phosphate: step 1/1. In terms of biological role, involved in the gluconeogenesis. Catalyzes stereospecifically the conversion of dihydroxyacetone phosphate (DHAP) to D-glyceraldehyde-3-phosphate (G3P). The polypeptide is Triosephosphate isomerase (Francisella tularensis subsp. tularensis (strain FSC 198)).